A 411-amino-acid polypeptide reads, in one-letter code: MTAQTPIHVYSEIGKLKKVLLHRPGKEIENLMPDYLERLLFDDIPFLEDAQKEHDAFAQALRDEGVEVLYLETLAAESLVTPEIREAFIDEYLSEANIRGRATKKAIRELLMSIEDNQELIEKTMAGVQKSELPEIPAAEKGLTDLVESSYPFAIDPMPNLYFTRDPFATIGTGVSLNHMFSETRNRETIYGKYIFTHHPIYGGGKVPMVYDRNETTRIEGGDELVLSKDVLAVGISQRTDAASIEKLLVNIFKQNLGFKKVLAFEFANNRKFMHLDTVFTMVDYDKFTIHPEIEGDLRVYSVTYENEALRIVEEKGDLAELLAANLGVEKVELIRCGGDNLVAAGREQWNDGSNTLTIAPGVVVVYNRNTITNAILESKGLKLIKIHGSELVRGRGGPRCMSMPFEREDI.

Cysteine 401 functions as the Amidino-cysteine intermediate in the catalytic mechanism.

The protein belongs to the arginine deiminase family.

The protein localises to the cytoplasm. It carries out the reaction L-arginine + H2O = L-citrulline + NH4(+). The protein operates within amino-acid degradation; L-arginine degradation via ADI pathway; carbamoyl phosphate from L-arginine: step 1/2. The sequence is that of Arginine deiminase from Streptococcus equi subsp. zooepidemicus (strain MGCS10565).